Here is a 1361-residue protein sequence, read N- to C-terminus: Protein CFT1 (1361 aa).

Positions 455-493 are disordered; that stretch reads AAYNNEDDDDDDDDFNLYSDEENDQVNNKNDRTFGTNES. Positions 459 to 478 are enriched in acidic residues; sequence NEDDDDDDDDFNLYSDEEND. Residues 479 to 493 show a composition bias toward polar residues; it reads QVNNKNDRTFGTNES.

It belongs to the CFT1 family.

It localises to the nucleus. In terms of biological role, RNA-binding component of the cleavage and polyadenylation factor (CPF) complex, which plays a key role in polyadenylation-dependent pre-mRNA 3'-end formation and cooperates with cleavage factors including the CFIA complex and NAB4/CFIB. Involved in poly(A) site recognition. May be involved in coupling transcription termination and mRNA 3'-end formation. The sequence is that of Protein CFT1 (CFT1) from Candida glabrata (strain ATCC 2001 / BCRC 20586 / JCM 3761 / NBRC 0622 / NRRL Y-65 / CBS 138) (Yeast).